Consider the following 233-residue polypeptide: Adenosine 5'-phosphosulfate reductase (233 aa).

4 residues coordinate [4Fe-4S] cluster: cysteine 120, cysteine 121, cysteine 203, and cysteine 206. The active-site Nucleophile; cysteine thiosulfonate intermediate is cysteine 229.

This sequence belongs to the PAPS reductase family. CysH subfamily. Requires [4Fe-4S] cluster as cofactor.

The protein localises to the cytoplasm. The catalysed reaction is [thioredoxin]-disulfide + sulfite + AMP + 2 H(+) = adenosine 5'-phosphosulfate + [thioredoxin]-dithiol. It participates in sulfur metabolism; hydrogen sulfide biosynthesis; sulfite from sulfate. Its function is as follows. Catalyzes the formation of sulfite from adenosine 5'-phosphosulfate (APS) using thioredoxin as an electron donor. The chain is Adenosine 5'-phosphosulfate reductase from Bacillus velezensis (strain DSM 23117 / BGSC 10A6 / LMG 26770 / FZB42) (Bacillus amyloliquefaciens subsp. plantarum).